Here is a 405-residue protein sequence, read N- to C-terminus: uncharacterized protein (405 aa).

12 consecutive transmembrane segments (helical) span residues 32–52 (MFVL…VLAG), 53–73 (WLTF…GVLL), 84–104 (IDMI…WLGW), 108–128 (PVVC…IAGI), 150–170 (AVYS…VGWL), 171–191 (GPEA…VCLS), 237–257 (WGAL…VAAG), 260–280 (VVGL…LLAG), 291–311 (IMTA…AEFG), 314–334 (GLTI…VAML), 352–372 (ISIS…GVVI), and 378–398 (AIFV…LSIP).

The protein belongs to the major facilitator superfamily.

Its subcellular location is the cell membrane. This is an uncharacterized protein from Sinorhizobium fredii (strain NBRC 101917 / NGR234).